Reading from the N-terminus, the 429-residue chain is MKERTIQPVNNGLNGNITIPGDKSISHRAVMFGAIAEGKTTIKGFLPGADCLSTISCFKEMGVDIVQNGDEVTVVGKGLEGLQEPKAVLDVGNSGTTIRLMSGILANTPFFSCVQGDASIAKRPMKRVTNPLKQMGANIDGREEGTFTPLTIRGGDLKAIEYTSPVASAQVKSAILLAGLRAEGVTAVTEPHISRDHTERMLEAFGVKVTREGKTVKLAGGQKLTATDVQVPGDVSSAAFFLVAGAIIPNSKLVLENVGMNPTRTGIIDVLEKMGATFTVEPINEGASEPAANITIETSSLKGIEIGGDIIPRLIDEIPVIALAATQAEGITVIKDAHELKVKETNRIDTVVAELTKLGARIEATDDGMIIYGKSVLKGNTVNSYGDHRIGMMLAIAGCLAEGKTTIEDAEAVGVSYPTFFEELQKLAK.

The 3-phosphoshikimate site is built by Lys23, Ser24, and Arg28. Lys23 is a phosphoenolpyruvate binding site. Phosphoenolpyruvate-binding residues include Gly95 and Arg123. The 3-phosphoshikimate site is built by Ser168, Gln170, Asp316, and Lys343. Phosphoenolpyruvate is bound at residue Gln170. Asp316 serves as the catalytic Proton acceptor. 2 residues coordinate phosphoenolpyruvate: Arg347 and Arg389.

This sequence belongs to the EPSP synthase family. In terms of assembly, monomer.

It is found in the cytoplasm. It catalyses the reaction 3-phosphoshikimate + phosphoenolpyruvate = 5-O-(1-carboxyvinyl)-3-phosphoshikimate + phosphate. It functions in the pathway metabolic intermediate biosynthesis; chorismate biosynthesis; chorismate from D-erythrose 4-phosphate and phosphoenolpyruvate: step 6/7. In terms of biological role, catalyzes the transfer of the enolpyruvyl moiety of phosphoenolpyruvate (PEP) to the 5-hydroxyl of shikimate-3-phosphate (S3P) to produce enolpyruvyl shikimate-3-phosphate and inorganic phosphate. This Bacillus cereus (strain ZK / E33L) protein is 3-phosphoshikimate 1-carboxyvinyltransferase.